A 151-amino-acid polypeptide reads, in one-letter code: UPF0178 protein CJA_1978 (151 aa).

The protein belongs to the UPF0178 family.

The chain is UPF0178 protein CJA_1978 from Cellvibrio japonicus (strain Ueda107) (Pseudomonas fluorescens subsp. cellulosa).